The chain runs to 438 residues: Glucosamine kinase (438 aa).

ATP contacts are provided by residues Lys133, 186 to 188, and Asp193; that span reads AYL. Asp300 is a binding site for D-glucosamine. Mg(2+) contacts are provided by Gln305, Asp317, and Asp319. A Substrate specificity determinant motif motif is present at residues 405–420; it reads QEVREYLYAVRHLPHW. Glu409 contributes to the D-glucosamine binding site.

Belongs to the actinobacterial glucosamine kinase family. As to quaternary structure, monomer. Requires Mg(2+) as cofactor.

It catalyses the reaction D-glucosamine + ATP = D-glucosamine 6-phosphate + ADP + H(+). In terms of biological role, catalyzes the ATP-dependent phosphorylation of D-glucosamine (GlcN) to D-glucosamine 6-phosphate. May be involved in the phosphorylation of acquired extracellular GlcN derived from the hydrolysis of chitosan, i.e., in the incorporation of exogenous GlcN into the bacterial GlcNAc metabolism. To a lesser extent, is also active on glucose, but is unable to phosphorylate maltose, 18 other sugars and several aminoglycoside antibiotics. The chain is Glucosamine kinase from Streptacidiphilus jiangxiensis.